The sequence spans 419 residues: Synaptotagmin-1 (419 aa).

The Vesicular portion of the chain corresponds to Met-1–Pro-58. A glycan (N-linked (GlcNAc...) asparagine) is linked at Asn-25. A helical membrane pass occupies residues Trp-59–Cys-80. S-palmitoyl cysteine attachment occurs at residues Cys-75, Cys-76, Cys-78, Cys-80, and Cys-83. Residues Lys-81–Lys-419 are Cytoplasmic-facing. A disordered region spans residues Lys-108 to Lys-139. Positions Gln-117–Lys-131 are enriched in acidic residues. Thr-126 is subject to Phosphothreonine. The segment at Glu-133–Asn-379 is phospholipid binding. The C2 1 domain occupies Lys-139–Arg-258. Residues Leu-169, Asp-170, and Asp-176 each contribute to the Ca(2+) site. Tyr-227 is modified (phosphotyrosine). Residues Asp-228, Phe-229, Asp-230, Ser-233, Lys-234, and Asp-236 each coordinate Ca(2+). The residue at position 262 (Ser-262) is a Phosphoserine. In terms of domain architecture, C2 2 spans Lys-270 to His-403. 2 residues coordinate Ca(2+): Asp-301 and Asp-307. Ser-340 and Ser-342 each carry phosphoserine. Ca(2+) contacts are provided by Asp-361, Asp-363, and Asp-369.

Belongs to the synaptotagmin family. In terms of assembly, homotetramer. Heterodimer; heterodimerizes with SYT2 in presence of calcium. Interacts with SCAMP5. Interacts with STON2. Forms a complex with SV2B, syntaxin 1 and SNAP25. Interacts with SV2A, SV2B and SV2C. Interacts with RIMS1. Interacts with PRRT2. Interacts with DNAJC5 in a phosphorylation-dependent manner. Interacts (via N-terminus) with RAB3A. Interacts with SYT12. Interacts with calmodulin. Interacts with DNM1 (via C-terminal proline-rich domain (PRD)); this interaction facilitates vesicle fission during clathrin-mediated endocytosis (CME). It depends on Ca(2+) as a cofactor. In terms of processing, glycosylated.

It localises to the cytoplasmic vesicle. It is found in the secretory vesicle membrane. The protein localises to the secretory vesicle. The protein resides in the synaptic vesicle membrane. Its subcellular location is the chromaffin granule membrane. It localises to the cytoplasm. Functionally, calcium sensor that participates in triggering neurotransmitter release at the synapse. May have a regulatory role in the membrane interactions during trafficking of synaptic vesicles at the active zone of the synapse. It binds acidic phospholipids with a specificity that requires the presence of both an acidic head group and a diacyl backbone. A Ca(2+)-dependent interaction between synaptotagmin and putative receptors for activated protein kinase C has also been reported. It can bind to at least three additional proteins in a Ca(2+)-independent manner; these are neurexins, syntaxin and AP2. Plays a role in dendrite formation by melanocytes. This Pongo abelii (Sumatran orangutan) protein is Synaptotagmin-1.